A 96-amino-acid chain; its full sequence is Large ribosomal subunit protein uL18m (96 aa).

It belongs to the universal ribosomal protein uL18 family.

The protein localises to the mitochondrion. The polypeptide is Large ribosomal subunit protein uL18m (RPL18) (Reclinomonas americana).